A 264-amino-acid polypeptide reads, in one-letter code: Small ribosomal subunit protein eS1 (264 aa).

N6-acetyllysine; alternate is present on K34. Residue K34 forms a Glycyl lysine isopeptide (Lys-Gly) (interchain with G-Cter in SUMO2); alternate linkage. K56 carries the N6-acetyllysine modification. An ADP-ribosyltyrosine modification is found at Y155. Positions 232–264 (HGEGSSSGKATGDETGAKVERADGYEPPVQESV) are disordered. Phosphoserine is present on residues S236 and S237. Positions 242–255 (TGDETGAKVERADG) are enriched in basic and acidic residues. The residue at position 249 (K249) is an N6-acetyllysine; alternate. K249 participates in a covalent cross-link: Glycyl lysine isopeptide (Lys-Gly) (interchain with G-Cter in SUMO2); alternate. Y256 carries the phosphotyrosine modification. The residue at position 263 (S263) is a Phosphoserine.

This sequence belongs to the eukaryotic ribosomal protein eS1 family. Component of the small ribosomal subunit. Mature ribosomes consist of a small (40S) and a large (60S) subunit. The 40S subunit contains about 33 different proteins and 1 molecule of RNA (18S). The 60S subunit contains about 49 different proteins and 3 molecules of RNA (28S, 5.8S and 5S). Identified in a IGF2BP1-dependent mRNP granule complex containing untranslated mRNAs. Binds with high affinity to IPO4. Interacts with DDIT3. Part of the small subunit (SSU) processome, composed of more than 70 proteins and the RNA chaperone small nucleolar RNA (snoRNA) U3. ADP-ribosylated at Tyr-155 by PARP1 in presence of HPF1.

The protein localises to the cytoplasm. Its subcellular location is the nucleus. It is found in the nucleolus. Functionally, component of the small ribosomal subunit. The ribosome is a large ribonucleoprotein complex responsible for the synthesis of proteins in the cell. Part of the small subunit (SSU) processome, first precursor of the small eukaryotic ribosomal subunit. During the assembly of the SSU processome in the nucleolus, many ribosome biogenesis factors, an RNA chaperone and ribosomal proteins associate with the nascent pre-rRNA and work in concert to generate RNA folding, modifications, rearrangements and cleavage as well as targeted degradation of pre-ribosomal RNA by the RNA exosome. May play a role during erythropoiesis through regulation of transcription factor DDIT3. The polypeptide is Small ribosomal subunit protein eS1 (Bos taurus (Bovine)).